Consider the following 602-residue polypeptide: Potassium-transporting ATPase potassium-binding subunit (602 aa).

Transmembrane regions (helical) follow at residues Ala-3 to Val-23, Gln-64 to Leu-84, Gly-135 to Ile-155, Leu-178 to Ile-198, Phe-282 to Phe-302, Val-313 to Ala-333, Gly-418 to Gly-438, Val-456 to Leu-476, Trp-522 to Ile-542, and Leu-565 to Ala-585.

This sequence belongs to the KdpA family. The system is composed of three essential subunits: KdpA, KdpB and KdpC.

It is found in the cell inner membrane. Part of the high-affinity ATP-driven potassium transport (or Kdp) system, which catalyzes the hydrolysis of ATP coupled with the electrogenic transport of potassium into the cytoplasm. This subunit binds the periplasmic potassium ions and delivers the ions to the membrane domain of KdpB through an intramembrane tunnel. The polypeptide is Potassium-transporting ATPase potassium-binding subunit (Burkholderia mallei (strain ATCC 23344)).